A 901-amino-acid chain; its full sequence is Protein translocase subunit SecA (901 aa).

Residues glutamine 87, 105–109 (GEGKT), and aspartate 512 contribute to the ATP site. The tract at residues 859-901 (HQDDDSAAAAALAAQTGERKVGRNDPCPCGSGKKYKQCHGRLQ) is disordered. Zn(2+) contacts are provided by cysteine 885, cysteine 887, cysteine 896, and histidine 897. The span at 891–901 (KKYKQCHGRLQ) shows a compositional bias: basic residues.

Belongs to the SecA family. Monomer and homodimer. Part of the essential Sec protein translocation apparatus which comprises SecA, SecYEG and auxiliary proteins SecDF-YajC and YidC. The cofactor is Zn(2+).

It is found in the cell inner membrane. Its subcellular location is the cytoplasm. The enzyme catalyses ATP + H2O + cellular proteinSide 1 = ADP + phosphate + cellular proteinSide 2.. Its function is as follows. Part of the Sec protein translocase complex. Interacts with the SecYEG preprotein conducting channel. Has a central role in coupling the hydrolysis of ATP to the transfer of proteins into and across the cell membrane, serving both as a receptor for the preprotein-SecB complex and as an ATP-driven molecular motor driving the stepwise translocation of polypeptide chains across the membrane. In Escherichia coli O9:H4 (strain HS), this protein is Protein translocase subunit SecA.